The following is a 36-amino-acid chain: uncharacterized protein (36 aa).

This is an uncharacterized protein from Archaeoglobus fulgidus (strain ATCC 49558 / DSM 4304 / JCM 9628 / NBRC 100126 / VC-16).